We begin with the raw amino-acid sequence, 273 residues long: Flagellin FljM (273 aa).

This sequence belongs to the bacterial flagellin family. In terms of assembly, in C.crescentus, the flagellar filament is composed of multiple flagellins of 29 kDa; 27 kDa and 25 kDa.

It localises to the secreted. Its subcellular location is the bacterial flagellum. In terms of biological role, flagellin is the subunit protein which polymerizes to form the filaments of bacterial flagella. This is Flagellin FljM (fljM) from Caulobacter vibrioides (strain ATCC 19089 / CIP 103742 / CB 15) (Caulobacter crescentus).